A 352-amino-acid polypeptide reads, in one-letter code: Protein RecA (352 aa).

G67–T74 is an ATP binding site.

The protein belongs to the RecA family.

It localises to the cytoplasm. In terms of biological role, can catalyze the hydrolysis of ATP in the presence of single-stranded DNA, the ATP-dependent uptake of single-stranded DNA by duplex DNA, and the ATP-dependent hybridization of homologous single-stranded DNAs. It interacts with LexA causing its activation and leading to its autocatalytic cleavage. In Chlamydia trachomatis serovar A (strain ATCC VR-571B / DSM 19440 / HAR-13), this protein is Protein RecA.